The sequence spans 113 residues: UPF0342 protein MGAS10750_Spy0713 (113 aa).

It belongs to the UPF0342 family.

This Streptococcus pyogenes serotype M4 (strain MGAS10750) protein is UPF0342 protein MGAS10750_Spy0713.